The chain runs to 262 residues: MYRPEKNSIRKVTMQREDLIQSMFAPPEAPPVRWRIAPAPVDYQEAVETMEREAADIAAGTADELVWLVEHPPLYTAGTSANAADLVIPDRFPVFATGRGGEYTYHGPGQRVVYVMLDLKRRRQDVRAFVAALESVIIATLDSMNVKGERREDRVGVWVRRPEKPPLMDGTVAEDKIAAIGIRLRRWVSFHGLSLNVDPDLEHFDGIVPCGIRGHGVTSLVDLGLPVMMADVDIRLREAFEMVFGPTRSETNGIGTARLESE.

The region spanning 60-248 (GTADELVWLV…AFEMVFGPTR (189 aa)) is the BPL/LPL catalytic domain. Residues 99-106 (RGGEYTYH), 179-181 (AIG), and 192-194 (GLS) each bind substrate. C210 functions as the Acyl-thioester intermediate in the catalytic mechanism.

It belongs to the LipB family.

It is found in the cytoplasm. The enzyme catalyses octanoyl-[ACP] + L-lysyl-[protein] = N(6)-octanoyl-L-lysyl-[protein] + holo-[ACP] + H(+). It functions in the pathway protein modification; protein lipoylation via endogenous pathway; protein N(6)-(lipoyl)lysine from octanoyl-[acyl-carrier-protein]: step 1/2. In terms of biological role, catalyzes the transfer of endogenously produced octanoic acid from octanoyl-acyl-carrier-protein onto the lipoyl domains of lipoate-dependent enzymes. Lipoyl-ACP can also act as a substrate although octanoyl-ACP is likely to be the physiological substrate. The protein is Octanoyltransferase of Sinorhizobium medicae (strain WSM419) (Ensifer medicae).